The chain runs to 443 residues: D-lactate dehydrogenase (443 aa).

Residues 1-182 (MSWIDELSKI…GGKTIKNSSG (182 aa)) lie on the Extracellular side of the membrane. Residues 32–209 (RAAENFVVVK…TKATIRLFPQ (178 aa)) enclose the FAD-binding PCMH-type domain. The chain crosses the membrane as a helical span at residues 183–203 (YSLLHLLVGSEGTLAVITKAT). The Cytoplasmic portion of the chain corresponds to 204 to 383 (IRLFPQMRDM…WEKSYFEFRK (180 aa)). The chain crosses the membrane as a helical span at residues 384 to 404 (SLLSLAVSLGGVISGEHGIGA). The Extracellular segment spans residues 405 to 443 (VKLSELEELFPEQFELMRQIKLLFDPKNILNPGKVVRKL).

This sequence belongs to the FAD-binding oxidoreductase/transferase type 4 family. FAD serves as cofactor. Requires Zn(2+) as cofactor.

The protein resides in the cell membrane. The catalysed reaction is (R)-lactate + A = pyruvate + AH2. In terms of biological role, catalyzes the dehydrogenation of (R)-lactate (D-lactate) to pyruvate. Is likely involved in the utilization of D-lactate as a sole source for both carbon and electrons for dissimilatory sulfate reduction. Cannot use L-lactate as substrate, and NAD(+), horse cytochrome c, methylene blue or dimethylnaphthoquinone as acceptors. Active in vitro with artificial electron acceptors such as 2,6-dichlorophenolindophenol (DCPIP); the physiological acceptor is not known, but potential acceptors include cytochromes or quinones. This Archaeoglobus fulgidus (strain ATCC 49558 / DSM 4304 / JCM 9628 / NBRC 100126 / VC-16) protein is D-lactate dehydrogenase.